We begin with the raw amino-acid sequence, 193 residues long: Transmembrane protein 066L (193 aa).

2 consecutive transmembrane segments (helical) span residues Val14–Trp34 and Leu48–Val68.

The protein belongs to the IIV-6 357R family.

It is found in the membrane. In Invertebrate iridescent virus 3 (IIV-3), this protein is Transmembrane protein 066L.